A 505-amino-acid chain; its full sequence is MEKLQYELQGYLEIDRYRKQRFLYPLLFREYIYALAHDHGLNSSIFYEPTENLGYDNDNKSSSLIVKRLITRLHQQNHLIISVNDSRFVGPNRSFYSQTISEGFAGIMEIPFSMRLVPSLERIAKYQNLRSIHSIFPFLEDKLSHLYYVSDILIPHPIHLEILLQTLRTRIRDAPSLHLLRCFLHEHHNWNSLITPKKSTSIFSKENQRLFLFLYNSHVYECESVLVFLRKQSSHLRSISSLAFLERTHFYGKIKHLVVAPRNDSQRTLPLWFFKEPLMHYVRYQGKSIMASRCTNLLMKKWKYYLVNFWQCHFHLWSQPGGIHINELSNHSFYFLGYLSGVRLMPWVIRSQMLENSFMIDTAIKRFDTIVPIFPLIGSLVKAKFCNVSGYPISKSVWADSSDSDIIARFGWICRNLSHYHSGSSKKHSLCRIKYILRLSCARTLARKHKSTVRVICKRLGSKLLEEFLTEEQEIVSFIFRGTRLRSERIWYLDIIRINGLVPHS.

The protein belongs to the intron maturase 2 family. MatK subfamily.

It is found in the plastid. The protein resides in the chloroplast. Its function is as follows. Usually encoded in the trnK tRNA gene intron. Probably assists in splicing its own and other chloroplast group II introns. In Nuphar advena (Common spatterdock), this protein is Maturase K.